A 317-amino-acid chain; its full sequence is Melanocyte-stimulating hormone receptor (317 aa).

The Extracellular segment spans residues Met1–Glu37. Asn29 carries N-linked (GlcNAc...) asparagine glycosylation. A helical membrane pass occupies residues Val38 to Ile63. Residues Ala64–Pro72 are Cytoplasmic-facing. The helical transmembrane segment at Met73 to Leu93 threads the bilayer. At Glu94–Asn118 the chain is on the extracellular side. The helical transmembrane segment at Thr119–Val140 threads the bilayer. The Cytoplasmic segment spans residues Asp141 to Arg163. A helical transmembrane segment spans residues Ala164–Cys183. The Extracellular segment spans residues Asp184–Cys191. A helical transmembrane segment spans residues Leu192–Leu211. Topologically, residues Ala212–Ala240 are cytoplasmic. Residues Ala241 to Leu266 form a helical membrane-spanning segment. Residues Cys267–Asn279 lie on the Extracellular side of the membrane. A helical transmembrane segment spans residues Phe280 to Phe300. At Arg301 to Trp317 the chain is on the cytoplasmic side. Cys315 carries the S-palmitoyl cysteine lipid modification.

This sequence belongs to the G-protein coupled receptor 1 family. In terms of assembly, interacts with MGRN1, but does not undergo MGRN1-mediated ubiquitination; this interaction competes with GNAS-binding and thus inhibits agonist-induced cAMP production. Interacts with OPN3; the interaction results in a decrease in MC1R-mediated cAMP signaling and ultimately a decrease in melanin production in melanocytes.

It is found in the cell membrane. Functionally, receptor for MSH (alpha, beta and gamma) and ACTH. The activity of this receptor is mediated by G proteins which activate adenylate cyclase. Mediates melanogenesis, the production of eumelanin (black/brown) and phaeomelanin (red/yellow), via regulation of cAMP signaling in melanocytes. This chain is Melanocyte-stimulating hormone receptor (MC1R), found in Ateles paniscus (Black spider monkey).